The chain runs to 298 residues: DNA-binding transcriptional activator HetR (298 aa).

Residue serine 152 is part of the active site.

The protein belongs to the peptidase S48 family. As to quaternary structure, homodimer; disulfide-linked.

Functionally, controls heterocyst differentiation. Dimerization is required for DNA-binding. Has both a protease and a DNA-binding activity. The polypeptide is DNA-binding transcriptional activator HetR (Nostoc sp. (strain PCC 9229)).